We begin with the raw amino-acid sequence, 432 residues long: Short/branched chain specific acyl-CoA dehydrogenase, mitochondrial (432 aa).

The transit peptide at 1–33 (MEGLAVRLLRGSRLLRRNFPTCLSSWKIPPHVS) directs the protein to the mitochondrion. At Lys-70 the chain carries N6-acetyllysine; alternate. Lys-70 carries the post-translational modification N6-succinyllysine; alternate. FAD is bound by residues 174 to 183 (FCLSEAGAGS) and 207 to 209 (WIS). Ser-183 is a binding site for substrate. Residue Ser-183 is modified to Phosphoserine. Residues Tyr-229 and Tyr-283 each coordinate substrate. Lys-284 carries the N6-acetyllysine; alternate modification. Lys-284 carries the N6-succinyllysine; alternate modification. 291 to 294 (NEGR) contacts substrate. FAD contacts are provided by residues Arg-319, Gln-330, and 387-391 (EWMGG). The active-site Proton acceptor is Glu-414. Residue 416 to 418 (ASN) coordinates FAD. Lys-426 is modified (N6-acetyllysine).

Belongs to the acyl-CoA dehydrogenase family. As to quaternary structure, homotetramer. FAD is required as a cofactor.

The protein localises to the mitochondrion matrix. The catalysed reaction is 2-methylbutanoyl-CoA + oxidized [electron-transfer flavoprotein] + H(+) = (2E)-2-methylbut-2-enoyl-CoA + reduced [electron-transfer flavoprotein]. It catalyses the reaction (2S)-2-methylbutanoyl-CoA + oxidized [electron-transfer flavoprotein] + H(+) = (2E)-2-methylbut-2-enoyl-CoA + reduced [electron-transfer flavoprotein]. It carries out the reaction (2R)-2-methylbutanoyl-CoA + oxidized [electron-transfer flavoprotein] + H(+) = ethylacryloyl-CoA + reduced [electron-transfer flavoprotein]. The enzyme catalyses butanoyl-CoA + oxidized [electron-transfer flavoprotein] + H(+) = (2E)-butenoyl-CoA + reduced [electron-transfer flavoprotein]. The catalysed reaction is 2-methylpropanoyl-CoA + oxidized [electron-transfer flavoprotein] + H(+) = 2-methylpropenoyl-CoA + reduced [electron-transfer flavoprotein]. It catalyses the reaction hexanoyl-CoA + oxidized [electron-transfer flavoprotein] + H(+) = (2E)-hexenoyl-CoA + reduced [electron-transfer flavoprotein]. It carries out the reaction valproyl-CoA + oxidized [electron-transfer flavoprotein] + H(+) = (2E)-2-propylpent-2-enoyl-CoA + reduced [electron-transfer flavoprotein]. Its pathway is lipid metabolism; mitochondrial fatty acid beta-oxidation. It functions in the pathway amino-acid degradation; L-isoleucine degradation. Short and branched chain specific acyl-CoA dehydrogenase that catalyzes the removal of one hydrogen from C-2 and C-3 of the fatty acyl-CoA thioester, resulting in the formation of trans-2-enoyl-CoA. Among the different mitochondrial acyl-CoA dehydrogenases, acts specifically on short and branched chain acyl-CoA derivatives such as (S)-2-methylbutyryl-CoA as well as short straight chain acyl-CoAs such as butyryl-CoA. Plays an important role in the metabolism of L-isoleucine by catalyzing the dehydrogenation of 2-methylbutyryl-CoA, one of the steps of the L-isoleucine catabolic pathway. Can also act on valproyl-CoA, a metabolite of the valproic acid drug. This chain is Short/branched chain specific acyl-CoA dehydrogenase, mitochondrial (ACADSB), found in Pongo abelii (Sumatran orangutan).